We begin with the raw amino-acid sequence, 74 residues long: UPF0270 protein NT01EI_3666 (74 aa).

This sequence belongs to the UPF0270 family.

The protein is UPF0270 protein NT01EI_3666 of Edwardsiella ictaluri (strain 93-146).